A 170-amino-acid chain; its full sequence is Adenine phosphoribosyltransferase (170 aa).

Belongs to the purine/pyrimidine phosphoribosyltransferase family. In terms of assembly, homodimer.

Its subcellular location is the cytoplasm. The catalysed reaction is AMP + diphosphate = 5-phospho-alpha-D-ribose 1-diphosphate + adenine. Its pathway is purine metabolism; AMP biosynthesis via salvage pathway; AMP from adenine: step 1/1. Its function is as follows. Catalyzes a salvage reaction resulting in the formation of AMP, that is energically less costly than de novo synthesis. The sequence is that of Adenine phosphoribosyltransferase from Geobacillus kaustophilus (strain HTA426).